Consider the following 293-residue polypeptide: Aromatic amino acid exporter YddG (293 aa).

Residues 1-6 are Cytoplasmic-facing; that stretch reads MTRQKA. Residues 6–137 form the EamA 1 domain; that stretch reads ATLIGLIAIV…LALVGVCWVL (132 aa). Residues 7–27 traverse the membrane as a helical segment; that stretch reads TLIGLIAIVLWSTMVGLIRGV. Over 28–33 the chain is Periplasmic; it reads SEGLGP. The chain crosses the membrane as a helical span at residues 34–54; that stretch reads VGGAAAIYSLSGLLLIFTVGF. At 55-62 the chain is on the cytoplasmic side; it reads PRIRQIPK. A helical membrane pass occupies residues 63-83; it reads GYLLAGSLLFVSYEICLALSL. At 84–92 the chain is on the periplasmic side; sequence GYAATHHQA. Residues 93–113 traverse the membrane as a helical segment; it reads IEVGMVNYLWPSLTILFAILF. Topologically, residues 114 to 118 are cytoplasmic; the sequence is NGQKT. The chain crosses the membrane as a helical span at residues 119 to 139; it reads NWLIVPGLLLALVGVCWVLGG. The Periplasmic segment spans residues 140 to 155; the sequence is DNGLHYDEIINNITTS. A helical membrane pass occupies residues 156–176; that stretch reads PLSYFLAFIGAFIWAAYCTVT. The EamA 2 domain occupies 158 to 285; sequence SYFLAFIGAF…ALMVCGGSLL (128 aa). The Cytoplasmic portion of the chain corresponds to 177-182; sequence NKYARG. A helical transmembrane segment spans residues 183 to 203; that stretch reads FNGITVFVLLTGASLWVYYFL. The Periplasmic portion of the chain corresponds to 204 to 218; sequence TPQPEMIFSTPVMIK. The chain crosses the membrane as a helical span at residues 219–239; that stretch reads LISAAFTLGFAYAAWNVGILH. Over 240–243 the chain is Cytoplasmic; that stretch reads GNVT. A helical membrane pass occupies residues 244-264; it reads IMAVGSYFTPVLSSALAAVLL. Topologically, residues 265–267 are periplasmic; it reads SAP. The chain crosses the membrane as a helical span at residues 268–288; the sequence is LSFSFWQGALMVCGGSLLCWL. The Cytoplasmic portion of the chain corresponds to 289–293; sequence ATRRG.

The protein belongs to the drug/metabolite transporter (DMT) superfamily. Aromatic amino acid/paraquat exporter (ArAA/P-E) (TC 2.A.7.17) family.

It is found in the cell inner membrane. The enzyme catalyses L-phenylalanine(in) = L-phenylalanine(out). It catalyses the reaction L-tyrosine(in) = L-tyrosine(out). It carries out the reaction L-tryptophan(in) = L-tryptophan(out). The catalysed reaction is L-threonine(in) = L-threonine(out). The enzyme catalyses L-methionine(in) = L-methionine(out). It catalyses the reaction L-lysine(in) = L-lysine(out). It carries out the reaction L-glutamate(out) = L-glutamate(in). The catalysed reaction is L-valine(in) = L-valine(out). The enzyme catalyses L-isoleucine(in) = L-isoleucine(out). Amino acid transporter with broad substrate specificity. Can transport various amino acids, including phenylalanine, tyrosine, tryptophan, L-threonine, L-methionine, L-lysine, L-glutamate, L-valine and L-isoleucine. Overexpression confers resistance to phenylalanine and increases export of phenylalanine, tyrosine and tryptophan. The polypeptide is Aromatic amino acid exporter YddG (yddG) (Escherichia coli (strain K12)).